The chain runs to 240 residues: Protein Thf1 (240 aa).

Residues 186–222 (KDLDLYRSNLEKVDQLLKVLEDAAEAERKKKEKQAAS) adopt a coiled-coil conformation. The tract at residues 212–240 (ERKKKEKQAASTTPAIEEAPVTTAESSES) is disordered.

It belongs to the THF1 family.

May be involved in photosynthetic membrane biogenesis. The protein is Protein Thf1 of Synechocystis sp. (strain ATCC 27184 / PCC 6803 / Kazusa).